The primary structure comprises 234 residues: Opacity protein opA55 (234 aa).

Alanine 1 is a signal peptide.

This sequence belongs to the opacity porin family.

The protein resides in the cell outer membrane. Its function is as follows. Implicated in a number of adherence functions. OPA proteins are implicated in pathogenesis and are subject to phase variation. This Neisseria gonorrhoeae protein is Opacity protein opA55 (opaE).